The following is a 331-amino-acid chain: NADH-quinone oxidoreductase subunit H (331 aa).

8 helical membrane-spanning segments follow: residues Phe-13–Leu-33, Trp-80–Ile-100, Ile-113–Gly-133, Leu-159–Val-179, Ala-183–Val-203, Val-249–Leu-269, Val-273–Ile-293, and Lys-311–Ile-331.

This sequence belongs to the complex I subunit 1 family. As to quaternary structure, NDH-1 is composed of 14 different subunits. Subunits NuoA, H, J, K, L, M, N constitute the membrane sector of the complex.

The protein resides in the cell membrane. It carries out the reaction a quinone + NADH + 5 H(+)(in) = a quinol + NAD(+) + 4 H(+)(out). NDH-1 shuttles electrons from NADH, via FMN and iron-sulfur (Fe-S) centers, to quinones in the respiratory chain. The immediate electron acceptor for the enzyme in this species is believed to be ubiquinone. Couples the redox reaction to proton translocation (for every two electrons transferred, four hydrogen ions are translocated across the cytoplasmic membrane), and thus conserves the redox energy in a proton gradient. This subunit may bind ubiquinone. The chain is NADH-quinone oxidoreductase subunit H from Rubrobacter xylanophilus (strain DSM 9941 / JCM 11954 / NBRC 16129 / PRD-1).